A 254-amino-acid polypeptide reads, in one-letter code: 3-dehydroquinate dehydratase (254 aa).

3-dehydroquinate is bound by residues 47 to 49 (EWR) and arginine 83. The Proton donor/acceptor role is filled by histidine 144. Lysine 171 acts as the Schiff-base intermediate with substrate in catalysis. The 3-dehydroquinate site is built by arginine 214, serine 233, and glutamine 237.

Belongs to the type-I 3-dehydroquinase family. As to quaternary structure, homodimer.

It carries out the reaction 3-dehydroquinate = 3-dehydroshikimate + H2O. The protein operates within metabolic intermediate biosynthesis; chorismate biosynthesis; chorismate from D-erythrose 4-phosphate and phosphoenolpyruvate: step 3/7. In terms of biological role, involved in the third step of the chorismate pathway, which leads to the biosynthesis of aromatic amino acids. Catalyzes the cis-dehydration of 3-dehydroquinate (DHQ) and introduces the first double bond of the aromatic ring to yield 3-dehydroshikimate. The protein is 3-dehydroquinate dehydratase of Clostridium botulinum (strain Eklund 17B / Type B).